A 433-amino-acid chain; its full sequence is Enolase (433 aa).

Gln164 serves as a coordination point for (2R)-2-phosphoglycerate. The Proton donor role is filled by Glu206. Mg(2+) is bound by residues Asp243, Glu289, and Asp316. 4 residues coordinate (2R)-2-phosphoglycerate: Lys341, Arg370, Ser371, and Lys392. Residue Lys341 is the Proton acceptor of the active site.

This sequence belongs to the enolase family. It depends on Mg(2+) as a cofactor.

The protein resides in the cytoplasm. It is found in the secreted. The protein localises to the cell surface. It catalyses the reaction (2R)-2-phosphoglycerate = phosphoenolpyruvate + H2O. It functions in the pathway carbohydrate degradation; glycolysis; pyruvate from D-glyceraldehyde 3-phosphate: step 4/5. In terms of biological role, catalyzes the reversible conversion of 2-phosphoglycerate (2-PG) into phosphoenolpyruvate (PEP). It is essential for the degradation of carbohydrates via glycolysis. This Borreliella burgdorferi (strain ZS7) (Borrelia burgdorferi) protein is Enolase.